A 346-amino-acid polypeptide reads, in one-letter code: Phosphoribosylformylglycinamidine cyclo-ligase (346 aa).

The protein belongs to the AIR synthase family.

Its subcellular location is the cytoplasm. It carries out the reaction 2-formamido-N(1)-(5-O-phospho-beta-D-ribosyl)acetamidine + ATP = 5-amino-1-(5-phospho-beta-D-ribosyl)imidazole + ADP + phosphate + H(+). It functions in the pathway purine metabolism; IMP biosynthesis via de novo pathway; 5-amino-1-(5-phospho-D-ribosyl)imidazole from N(2)-formyl-N(1)-(5-phospho-D-ribosyl)glycinamide: step 2/2. The chain is Phosphoribosylformylglycinamidine cyclo-ligase from Shewanella pealeana (strain ATCC 700345 / ANG-SQ1).